The chain runs to 201 residues: MSLSTLKNRRERGFFDGQFLIAMPGIEDRNFARTVIYICAHSDAGAMGFVINRPQSLTFTDVLLHLDMIKQEDQIVLPQRARDFPIQTGGPVESGRGFVLHSDDYSSDSSIPVSDDICLTATLDIVRAISKGDGPTRATMLLGYSSWGAGQLENEVVNNGWLTCPANEELIFDRSLDDKYERALAGMGVTAAMLSAEAGHA.

It belongs to the UPF0301 (AlgH) family.

The sequence is that of UPF0301 protein Rleg2_0617 from Rhizobium leguminosarum bv. trifolii (strain WSM2304).